The primary structure comprises 517 residues: Beta-glucosidase 1 (517 aa).

A signal peptide spans 1-22; sequence MEDVLTLITMIVLLLLAFHGFG. A beta-D-glucoside-binding positions include Gln48, His145, and 190 to 191; that span reads NE. Glu191 functions as the Proton donor in the catalytic mechanism. The cysteines at positions 210 and 217 are disulfide-linked. Asn216 and Asn221 each carry an N-linked (GlcNAc...) asparagine glycan. Residues Tyr333 and Glu406 each contribute to the a beta-D-glucoside site. Glu406 (nucleophile) is an active-site residue. Asn441 carries N-linked (GlcNAc...) asparagine glycosylation. Trp451 and Phe467 together coordinate a beta-D-glucoside. N-linked (GlcNAc...) asparagine glycans are attached at residues Asn473 and Asn512.

It belongs to the glycosyl hydrolase 1 family.

The enzyme catalyses Hydrolysis of terminal, non-reducing beta-D-glucosyl residues with release of beta-D-glucose.. In Arabidopsis thaliana (Mouse-ear cress), this protein is Beta-glucosidase 1.